Reading from the N-terminus, the 147-residue chain is Hemoglobin subunit beta (147 aa).

The residue at position 2 (Val-2) is an N-acetylvaline. The Globin domain occupies 3-147 (HLSAEEKGHI…VATALAHKYH (145 aa)). The residue at position 60 (Lys-60) is an N6-acetyllysine. Heme b is bound at residue His-64. Lys-83 carries the N6-acetyllysine modification. His-93 contributes to the heme b binding site. The residue at position 94 (Cys-94) is an S-nitrosocysteine. Lys-145 bears the N6-acetyllysine mark.

This sequence belongs to the globin family. In terms of assembly, heterotetramer of two alpha chains and two beta chains. In terms of tissue distribution, red blood cells.

Functionally, involved in oxygen transport from the lung to the various peripheral tissues. This Sminthopsis crassicaudata (Fat-tailed dunnart) protein is Hemoglobin subunit beta (HBB).